The sequence spans 90 residues: U7-theraphotoxin-Hhn1a 5 (90 aa).

Residues 1 to 19 (MKTAIFTVVLALAVFAVLS) form the signal peptide. Positions 20–50 (FGWEANEKALSEESTELIHEKEAASETEARE) are excised as a propeptide. Disulfide bonds link C51–C65, C58–C70, and C64–C81.

This sequence belongs to the neurotoxin 10 (Hwtx-1) family. 13 (Hntx-13) subfamily. As to expression, expressed by the venom gland.

It localises to the secreted. In terms of biological role, ion channel inhibitor. The protein is U7-theraphotoxin-Hhn1a 5 of Cyriopagopus hainanus (Chinese bird spider).